Consider the following 462-residue polypeptide: MQFLPLFHKLQGRPVLVIGGGEVALRKARLLSDAGARLRVVAPEIRSELQELAGADGICLRGYASSDLQGVALVIAATDDEPLNARISAEAQAQGIPVNVVDAPALCSVIFPAIVDRSPLIVAVSSGGDAPVLARLIRAKIETWIPATYGQLANLGKRFRDRVKQLFPDVQQRRVFWEDVFQGQIAESVFAGKPEEGERLLEERLAGAAPRALGEVYLVGAGPGDPDLLTFRALRLMQQADVVLYDRLVAPAIIELCRRDAERIYVGKRRADHAVPQEQINQLLIDLARQGKRVLRLKGGDPFIFGRGGEEIEQLAAEDIPFQVVPGITAASGCAAYAGIPLTHRDHAQSVRFVTGHLKDGSSNLPWKDLVAPGQTLVFYMGLVGLYGICEQLIAHGRSAATPAALVQQGTTQNQRVFTGTLETLPQLVAQHEVHAPTLVIVGEVVTLRDKLAWFEGAQGSL.

Residues 1 to 201 form a precorrin-2 dehydrogenase /sirohydrochlorin ferrochelatase region; the sequence is MQFLPLFHKL…GKPEEGERLL (201 aa). NAD(+) contacts are provided by residues 22 to 23 and 43 to 44; these read EV and PE. A Phosphoserine modification is found at serine 126. Residues 214 to 462 form a uroporphyrinogen-III C-methyltransferase region; the sequence is GEVYLVGAGP…AWFEGAQGSL (249 aa). Proline 223 is a binding site for S-adenosyl-L-methionine. The active-site Proton acceptor is aspartate 246. Catalysis depends on lysine 268, which acts as the Proton donor. Residues 299 to 301, isoleucine 304, 329 to 330, methionine 381, and glycine 410 contribute to the S-adenosyl-L-methionine site; these read GGD and TA.

The protein in the N-terminal section; belongs to the precorrin-2 dehydrogenase / sirohydrochlorin ferrochelatase family. It in the C-terminal section; belongs to the precorrin methyltransferase family.

It carries out the reaction uroporphyrinogen III + 2 S-adenosyl-L-methionine = precorrin-2 + 2 S-adenosyl-L-homocysteine + H(+). The catalysed reaction is precorrin-2 + NAD(+) = sirohydrochlorin + NADH + 2 H(+). The enzyme catalyses siroheme + 2 H(+) = sirohydrochlorin + Fe(2+). The protein operates within cofactor biosynthesis; adenosylcobalamin biosynthesis; precorrin-2 from uroporphyrinogen III: step 1/1. It functions in the pathway cofactor biosynthesis; adenosylcobalamin biosynthesis; sirohydrochlorin from precorrin-2: step 1/1. Its pathway is porphyrin-containing compound metabolism; siroheme biosynthesis; precorrin-2 from uroporphyrinogen III: step 1/1. It participates in porphyrin-containing compound metabolism; siroheme biosynthesis; siroheme from sirohydrochlorin: step 1/1. The protein operates within porphyrin-containing compound metabolism; siroheme biosynthesis; sirohydrochlorin from precorrin-2: step 1/1. In terms of biological role, multifunctional enzyme that catalyzes the SAM-dependent methylations of uroporphyrinogen III at position C-2 and C-7 to form precorrin-2 via precorrin-1. Then it catalyzes the NAD-dependent ring dehydrogenation of precorrin-2 to yield sirohydrochlorin. Finally, it catalyzes the ferrochelation of sirohydrochlorin to yield siroheme. This chain is Siroheme synthase, found in Ectopseudomonas mendocina (strain ymp) (Pseudomonas mendocina).